Consider the following 232-residue polypeptide: Dehydrin DHN3 (232 aa).

A compositionally biased stretch (polar residues) spans 1–14 (MSQYQNQYGAQTGM). Disordered regions lie at residues 1–66 (MSQY…QHRG) and 140–232 (EHHG…CTGH). Residues 49 to 60 (TTGGATGQGHGH) show a composition bias toward gly residues. Basic and acidic residues predominate over residues 140–157 (EHHGDKKGVMDKIKEKIP). Polar residues predominate over residues 159–168 (TEQSRTNTDG). Positions 198–223 (EQQDVHHGDEQHGEKKGIMEKIKEKL) are enriched in basic and acidic residues.

Belongs to the plant dehydrin family.

The sequence is that of Dehydrin DHN3 (DHN3) from Pisum sativum (Garden pea).